The sequence spans 862 residues: FAS1 domain-containing protein YLR001C (862 aa).

The first 23 residues, 1 to 23, serve as a signal peptide directing secretion; that stretch reads MNMAIQTIKYIFWLLPILGLTQA. Residues 24–762 are Vacuolar-facing; it reads LLQNPGDDFP…KYHLRLPGIA (739 aa). One can recognise an FAS1 1 domain in the interval 34-162; sequence FSTVIDILSE…ASLQGINNLL (129 aa). 13 N-linked (GlcNAc...) asparagine glycosylation sites follow: Asn68, Asn112, Asn152, Asn200, Asn291, Asn333, Asn450, Asn521, Asn542, Asn569, Asn663, Asn679, and Asn688. 2 consecutive FAS1 domains span residues 463–604 and 606–744; these read PGDL…DQLD and PVDL…DKPI. Residues 763 to 783 form a helical membrane-spanning segment; it reads VGFGVIIGVTIAISLLFCIII. Over 784-862 the chain is Cytoplasmic; that stretch reads TRGGKVKDKN…QKGGRSVSTS (79 aa).

The protein resides in the vacuole membrane. This Saccharomyces cerevisiae (strain ATCC 204508 / S288c) (Baker's yeast) protein is FAS1 domain-containing protein YLR001C.